A 267-amino-acid polypeptide reads, in one-letter code: tRNA pseudouridine synthase A (267 aa).

Asp-52 (nucleophile) is an active-site residue. Tyr-110 provides a ligand contact to substrate.

Belongs to the tRNA pseudouridine synthase TruA family. Homodimer.

It catalyses the reaction uridine(38/39/40) in tRNA = pseudouridine(38/39/40) in tRNA. Functionally, formation of pseudouridine at positions 38, 39 and 40 in the anticodon stem and loop of transfer RNAs. The protein is tRNA pseudouridine synthase A of Paraburkholderia phymatum (strain DSM 17167 / CIP 108236 / LMG 21445 / STM815) (Burkholderia phymatum).